Reading from the N-terminus, the 147-residue chain is MGFIFSKSMNENMKNQQEFMVTHARLQLERHLTMQNEMRERQMAMQIAWSREFLKYFGTFFGIATISLATGALKRKKPAFLVPIVPLSFIFTYQYDLGYGTLLQRMKSEAEDILETEKTKLELPKGLITFESLEKARREQSKLFSDK.

At 1 to 52 the chain is on the extracellular side; the sequence is MGFIFSKSMNENMKNQQEFMVTHARLQLERHLTMQNEMRERQMAMQIAWSRE. A helical membrane pass occupies residues 53-73; that stretch reads FLKYFGTFFGIATISLATGAL. The Cytoplasmic portion of the chain corresponds to 74–78; sequence KRKKP. Residues 79-99 form a helical membrane-spanning segment; sequence AFLVPIVPLSFIFTYQYDLGY. Residues 100 to 147 are Extracellular-facing; sequence GTLLQRMKSEAEDILETEKTKLELPKGLITFESLEKARREQSKLFSDK.

In terms of assembly, interacts with PLAT. Interacts with PLAUR. In terms of tissue distribution, expressed in monocytes; detected in differentiated monocytes but not in progenitor cells. Expressed in adrenal medulla and hippocampus.

The protein resides in the cell membrane. In terms of biological role, receptor for plasminogen. Regulates urokinase plasminogen activator-dependent and stimulates tissue-type plasminogen activator-dependent cell surface plasminogen activation. Proposed to be part of a local catecholaminergic cell plasminogen activation system that regulates neuroendocrine prohormone processing. Involved in regulation of inflammatory response; regulates monocyte chemotactic migration and matrix metalloproteinase activation, such as of MMP2 and MMP9. In Mus musculus (Mouse), this protein is Plasminogen receptor (KT) (Plgrkt).